The chain runs to 106 residues: Phosphoribosyl-ATP pyrophosphatase (106 aa).

The protein belongs to the PRA-PH family.

Its subcellular location is the cytoplasm. The catalysed reaction is 1-(5-phospho-beta-D-ribosyl)-ATP + H2O = 1-(5-phospho-beta-D-ribosyl)-5'-AMP + diphosphate + H(+). It functions in the pathway amino-acid biosynthesis; L-histidine biosynthesis; L-histidine from 5-phospho-alpha-D-ribose 1-diphosphate: step 2/9. The sequence is that of Phosphoribosyl-ATP pyrophosphatase from Limosilactobacillus fermentum (strain NBRC 3956 / LMG 18251) (Lactobacillus fermentum).